The following is a 704-amino-acid chain: Serotransferrin (704 aa).

Residues 1–19 form the signal peptide; it reads MRPAVRALLACAVLGLCLA. 2 Transferrin-like domains span residues 25–351 and 364–689; these read VRWC…NLRE and VKWC…NLRQ. Cystine bridges form between Cys-28–Cys-66 and Cys-38–Cys-57. Residue Arg-42 is modified to Dimethylated arginine. Fe(3+) contacts are provided by Asp-81 and Tyr-113. Cystine bridges form between Cys-136/Cys-217, Cys-176/Cys-192, Cys-179/Cys-200, Cys-189/Cys-202, and Cys-250/Cys-264. Positions 138, 142, 144, and 145 each coordinate hydrogencarbonate. Tyr-211 contributes to the Fe(3+) binding site. His-272 is a Fe(3+) binding site. 11 cysteine pairs are disulfide-bonded: Cys-362–Cys-622, Cys-367–Cys-399, Cys-377–Cys-390, Cys-424–Cys-699, Cys-441–Cys-663, Cys-473–Cys-549, Cys-497–Cys-690, Cys-507–Cys-521, Cys-518–Cys-532, Cys-589–Cys-603, and Cys-641–Cys-646. Residues Asp-414 and Tyr-449 each contribute to the Fe(3+) site. Positions 475, 479, 481, and 482 each coordinate hydrogencarbonate. Asn-514 is a glycosylation site (N-linked (GlcNAc...) asparagine). A Fe(3+)-binding site is contributed by Tyr-543. His-611 serves as a coordination point for Fe(3+). A Phosphoserine modification is found at Ser-691.

It belongs to the transferrin family. In terms of assembly, monomer. Part of a complex composed of SLC40A1/ferroportin, TF/transferrin and HEPH/hephaestin that transfers iron from cells to transferrin. As to expression, expressed by the liver and secreted in plasma.

Its subcellular location is the secreted. Its function is as follows. Transferrins are iron binding transport proteins which can bind two Fe(3+) ions in association with the binding of an anion, usually bicarbonate. It is responsible for the transport of iron from sites of absorption and heme degradation to those of storage and utilization. Serum transferrin may also have a further role in stimulating cell proliferation. The sequence is that of Serotransferrin (TF) from Bos taurus (Bovine).